The primary structure comprises 489 residues: Glutamate--tRNA ligase (489 aa).

A 'HIGH' region motif is present at residues proline 12–methionine 22. The short motif at lysine 256–arginine 260 is the 'KMSKS' region element. Lysine 259 is an ATP binding site.

This sequence belongs to the class-I aminoacyl-tRNA synthetase family. Glutamate--tRNA ligase type 1 subfamily. In terms of assembly, monomer.

The protein resides in the cytoplasm. It carries out the reaction tRNA(Glu) + L-glutamate + ATP = L-glutamyl-tRNA(Glu) + AMP + diphosphate. In terms of biological role, catalyzes the attachment of glutamate to tRNA(Glu) in a two-step reaction: glutamate is first activated by ATP to form Glu-AMP and then transferred to the acceptor end of tRNA(Glu). This Mycobacterium marinum (strain ATCC BAA-535 / M) protein is Glutamate--tRNA ligase.